Reading from the N-terminus, the 309-residue chain is uncharacterized protein (309 aa).

Basic residues predominate over residues 1-11; it reads MPGNSRRRGAV. The segment at 1 to 69 is disordered; it reads MPGNSRRRGA…PVKRTDETET (69 aa). Positions 261, 281, and 290 each coordinate S-adenosyl-L-methionine.

The protein belongs to the class IV-like SAM-binding methyltransferase superfamily. RNA methyltransferase TrmH family.

This is an uncharacterized protein from Mycobacterium leprae (strain TN).